Consider the following 192-residue polypeptide: Adenylate kinase (192 aa).

10 to 15 is a binding site for ATP; that stretch reads GAGKGT. An NMP region spans residues 30–56; the sequence is GTGGMLRALEPESGEQIHLRIDRGHFA. AMP contacts are provided by residues T31, R36, 82-85, and Q89; that span reads GFPR. Residues 123–133 form an LID region; the sequence is KRGETENRADD. ATP is bound at residue R124. Positions 130 and 141 each coordinate AMP. Residue D169 coordinates ATP.

This sequence belongs to the adenylate kinase family. In terms of assembly, monomer.

It is found in the cytoplasm. The catalysed reaction is AMP + ATP = 2 ADP. The protein operates within purine metabolism; AMP biosynthesis via salvage pathway; AMP from ADP: step 1/1. Catalyzes the reversible transfer of the terminal phosphate group between ATP and AMP. Plays an important role in cellular energy homeostasis and in adenine nucleotide metabolism. The protein is Adenylate kinase of Rhodopirellula baltica (strain DSM 10527 / NCIMB 13988 / SH1).